Consider the following 250-residue polypeptide: 5'/3'-nucleotidase SurE (250 aa).

A divalent metal cation-binding residues include Asp9, Asp10, Ser40, and Asn93.

This sequence belongs to the SurE nucleotidase family. It depends on a divalent metal cation as a cofactor.

It localises to the cytoplasm. The enzyme catalyses a ribonucleoside 5'-phosphate + H2O = a ribonucleoside + phosphate. It carries out the reaction a ribonucleoside 3'-phosphate + H2O = a ribonucleoside + phosphate. It catalyses the reaction [phosphate](n) + H2O = [phosphate](n-1) + phosphate + H(+). Nucleotidase with a broad substrate specificity as it can dephosphorylate various ribo- and deoxyribonucleoside 5'-monophosphates and ribonucleoside 3'-monophosphates with highest affinity to 3'-AMP. Also hydrolyzes polyphosphate (exopolyphosphatase activity) with the preference for short-chain-length substrates (P20-25). Might be involved in the regulation of dNTP and NTP pools, and in the turnover of 3'-mononucleotides produced by numerous intracellular RNases (T1, T2, and F) during the degradation of various RNAs. In Yersinia enterocolitica serotype O:8 / biotype 1B (strain NCTC 13174 / 8081), this protein is 5'/3'-nucleotidase SurE.